A 312-amino-acid chain; its full sequence is Olfactory receptor 5J2 (312 aa).

The Extracellular segment spans residues 1 to 25 (MADDNFTVVTEFILLGLTDHAELKA). N5 carries N-linked (GlcNAc...) asparagine glycosylation. The helical transmembrane segment at 26–46 (VLFVVFLVIYAITLLRNLGMI) threads the bilayer. At 47–54 (LLIQITSK) the chain is on the cytoplasmic side. Residues 55–75 (LHTPMYFLLSCLSFVDACYSS) form a helical membrane-spanning segment. Residues 76-99 (AIAPKMLVNLLVVKATISFSACMV) are Extracellular-facing. A disulfide bridge links C97 with C189. Residues 100-120 (QHLCFGVFITTEGFLLSVMAY) traverse the membrane as a helical segment. At 121–139 (DRYVAIVSPLLYTVAMSDR) the chain is on the cytoplasmic side. A helical transmembrane segment spans residues 140-160 (KCVELVTGSWIGGIVNTLIHT). Residues 161–196 (ISLRRLSFCRLNAVSHFFCDIPSLLKLSCSDTSMNE) are Extracellular-facing. A helical transmembrane segment spans residues 197–217 (LLLLTFSGVIAMATFLTVIIS). Residues 218–237 (YIFIAFASLRIHSASGRQQA) are Cytoplasmic-facing. A helical transmembrane segment spans residues 238–258 (FSTCASHLTAVTIFYGTLIFS). Residues 259-271 (YIQPSSQYFVEQE) lie on the Extracellular side of the membrane. Residues 272–292 (KVVSMFYTLGIPMLNLLIHSL) traverse the membrane as a helical segment. Residues 293 to 312 (RNKDVKEAVKRAIEMKHFLC) are Cytoplasmic-facing.

This sequence belongs to the G-protein coupled receptor 1 family.

The protein resides in the cell membrane. Functionally, odorant receptor. In Homo sapiens (Human), this protein is Olfactory receptor 5J2 (OR5J2).